Consider the following 204-residue polypeptide: MKKFILASNNAHKVKEIKEILKDFNLNILSLNEAGIDIDVEEDGKTFEENSFKKANEIRKYLLSKGESDFIVMADDSGLEVDYLNGAPGIYSARYAGEHGNDSKNNEKLLEELKNVKDDERKANFICVIVAVTDKGEKIVAEGKSYGLILEALSGNEGFGYDPLFFVPEYKKTFAEMTSDEKNAISHRGRALEKLKDNLKGILK.

Residue S8 to K13 coordinates substrate. Mg(2+) contacts are provided by E41 and D76. D76 serves as the catalytic Proton acceptor. Residues S77, F159 to D162, K182, and H187 to R188 contribute to the substrate site.

Belongs to the HAM1 NTPase family. In terms of assembly, homodimer. The cofactor is Mg(2+).

The catalysed reaction is XTP + H2O = XMP + diphosphate + H(+). It carries out the reaction dITP + H2O = dIMP + diphosphate + H(+). It catalyses the reaction ITP + H2O = IMP + diphosphate + H(+). Functionally, pyrophosphatase that catalyzes the hydrolysis of nucleoside triphosphates to their monophosphate derivatives, with a high preference for the non-canonical purine nucleotides XTP (xanthosine triphosphate), dITP (deoxyinosine triphosphate) and ITP. Seems to function as a house-cleaning enzyme that removes non-canonical purine nucleotides from the nucleotide pool, thus preventing their incorporation into DNA/RNA and avoiding chromosomal lesions. This Clostridium perfringens (strain 13 / Type A) protein is dITP/XTP pyrophosphatase.